We begin with the raw amino-acid sequence, 484 residues long: ATP synthase subunit beta (484 aa).

The interval 104 to 123 is disordered; that stretch reads ERGPIGSKQTMPIHADAPPF. 156–163 serves as a coordination point for ATP; that stretch reads GGAGVGKT.

The protein belongs to the ATPase alpha/beta chains family. F-type ATPases have 2 components, CF(1) - the catalytic core - and CF(0) - the membrane proton channel. CF(1) has five subunits: alpha(3), beta(3), gamma(1), delta(1), epsilon(1). CF(0) has three main subunits: a(1), b(2) and c(9-12). The alpha and beta chains form an alternating ring which encloses part of the gamma chain. CF(1) is attached to CF(0) by a central stalk formed by the gamma and epsilon chains, while a peripheral stalk is formed by the delta and b chains.

It is found in the cell inner membrane. It carries out the reaction ATP + H2O + 4 H(+)(in) = ADP + phosphate + 5 H(+)(out). Produces ATP from ADP in the presence of a proton gradient across the membrane. The catalytic sites are hosted primarily by the beta subunits. In Zymomonas mobilis subsp. mobilis (strain ATCC 31821 / ZM4 / CP4), this protein is ATP synthase subunit beta.